Here is a 356-residue protein sequence, read N- to C-terminus: Arginine kinase Scy s 2 (356 aa).

A Phosphagen kinase N-terminal domain is found at Lys-9 to Lys-91. Gly-64–Tyr-68 serves as a coordination point for L-arginine. Residues Phe-119–Met-356 enclose the Phosphagen kinase C-terminal domain. ATP-binding positions include Ser-122 to Arg-126 and His-185. Residue Glu-225 coordinates L-arginine. Arg-229 contributes to the ATP binding site. Cys-271 provides a ligand contact to L-arginine. ATP is bound by residues Arg-280 to His-284 and Arg-309 to Glu-314. Glu-314 is an L-arginine binding site.

It belongs to the ATP:guanido phosphotransferase family. As to expression, muscle (at protein level).

It carries out the reaction L-arginine + ATP = N(omega)-phospho-L-arginine + ADP + H(+). Catalyzes the reversible transfer of high energy ATP gamma-phosphate group to L-arginine. The chain is Arginine kinase Scy s 2 from Scylla serrata (Mud crab).